A 206-amino-acid polypeptide reads, in one-letter code: MPFIDENQLSVREMREEEAPVVLEMLKDGFKDTENRLILYILTRPMTLLLMAVASSGLRFILNSFSVALVIPVLLTIVGLKLLLWRSPDLKQIYSYYSIGQRKIWVAVYDQDDICGCVALEPTQDHQTVELKRMSVSRWYRRSGVGTHLLKFFEDHAKKKGFRGIVLYTSVVAKAAIGLFKNCGYKVTGGWNWLGYTIVQEFRKDI.

One can recognise an N-acetyltransferase domain in the interval 9–206 (LSVREMREEE…TIVQEFRKDI (198 aa)). The next 2 membrane-spanning stretches (helical) occupy residues 37–57 (LILY…ASSG) and 60–80 (FILN…IVGL).

This sequence belongs to the camello family.

The protein resides in the membrane. Functionally, probable acetyltransferase. The sequence is that of Probable N-acetyltransferase 14 (nat14) from Xenopus tropicalis (Western clawed frog).